We begin with the raw amino-acid sequence, 256 residues long: Nuclear shuttle protein (256 aa).

The Bipartite nuclear localization signal motif lies at 18-39 (NTTNRFPIRRKYVGGHTRPSVR). The short motif at 81–96 (SRGPSGDGRSRDYIKL) is the Nuclear localization signal element. The interval 150 to 187 (ELFGAYSACYVNLRLLNNQQHRYRVLHSVKRFVSSAGD) is interaction with Arabidopsis thaliana NSI protein.

The protein belongs to the begomovirus nuclear shuttle protein family. As to quaternary structure, binds to single-stranded and double-stranded viral DNA. Interacts with the host nuclear shuttle interacting (NSI) protein. This interaction may allow NSP to recruit NSI monomers to the viral genome and thus regulate nuclear export of viral genome by NSP.

The protein resides in the host nucleus. The protein localises to the host cytoplasm. It is found in the host cell membrane. In terms of biological role, binds to the genomic viral ssDNA, shuttles it into and out of the cell nucleus. Begomoviruses use 2 proteins to transport their DNA from cell to cell. The nuclear shuttle protein (NSP) shuttles it between nucleus and cytoplasm and the movement protein (MP) probably transports the DNA-NSP complex to the cell periphery and facilitates movement across the cell wall. In Hewittia sublobata (Coralbush), this protein is Nuclear shuttle protein.